Here is a 681-residue protein sequence, read N- to C-terminus: MESTVATITSTLAAVTASAPPKYDNLWMLILGFIIAFVLAFSVGANDVANSFGTAVGSGVVTLKQACILASIFETVGSALLGAKVSETIRNGLIDVELYNETQDLLMAGSVSAMFGSAVWQLVASFLKLPISGTHCIVGATIGFSLVANGQKGVKWSELIKIVMSWFVSPLLSGIMSGILFFLVRAFILRKADPVPNGLRALPIFYACTIGINLFSIMYTGAPLLGFDKLPLWGTILISVGCAVFCALIVWFFVCPRMKRKIEREVKSSPSESPLMEKKSNLKEDHEETKMAPGDVEHRNPVSEVVCATGPLRAVVEERTVSFKLGDLEEAPERERLPMDLKEETSIDSTINGAVQLPNGNLVQFSQTVSNQINSSGHYQYHTVHKDSGLYKELLHKLHLAKVGDCMGDSGDKPLRRNNSYTSYTMAICGMPLDSFRAKEGEQKGDEMETLTWPNADTKKRIRMDSYTSYCNAVSDLHSESEMDMSVKAEMGLGDRKGSSGSLEEWYDQDKPEVSLLFQFLQILTACFGSFAHGGNDVSNAIGPLVALYLVYKQEASTKAATPIWLLLYGGVGICMGLWVWGRRVIQTMGKDLTPITPSSGFSIELASALTVVIASNIGLPISTTHCKVGSVVSVGWLRSKKAVDWRLFRNIFMAWFVTVPISGVISAAIMAVFKYIILPV.

Transmembrane regions (helical) follow at residues 25–45 (NLWMLILGFIIAFVLAFSVGA), 66–86 (ACILASIFETVGSALLGAKVS), 106–126 (LMAGSVSAMFGSAVWQLVASF), 162–182 (IVMSWFVSPLLSGIMSGILFF), 201–221 (ALPIFYACTIGINLFSIMYTG), and 234–254 (GTILISVGCAVFCALIVWFFV). The disordered stretch occupies residues 266-295 (VKSSPSESPLMEKKSNLKEDHEETKMAPGD). Ser-269 and Ser-273 each carry phosphoserine. Positions 275 to 295 (LMEKKSNLKEDHEETKMAPGD) are enriched in basic and acidic residues. Residues 514–534 (VSLLFQFLQILTACFGSFAHG) form a helical membrane-spanning segment. The interval 553-560 (KQEASTKA) is a. The next 3 membrane-spanning stretches (helical) occupy residues 561-581 (ATPIWLLLYGGVGICMGLWVW), 602-622 (FSIELASALTVVIASNIGLPI), and 652-672 (IFMAWFVTVPISGVISAAIMA).

Belongs to the inorganic phosphate transporter (PiT) (TC 2.A.20) family. In terms of tissue distribution, ubiquitously expressed.

Its subcellular location is the cell membrane. It catalyses the reaction 2 Na(+)(out) + phosphate(out) = 2 Na(+)(in) + phosphate(in). Its function is as follows. Sodium-phosphate symporter which preferentially transports the monovalent form of phosphate with a stoichiometry of two sodium ions per phosphate ion. May play a role in extracellular matrix and cartilage calcification as well as in vascular calcification. Essential for cell proliferation but this function is independent of its phosphate transporter activity. Functionally, (Microbial infection) May function as a retroviral receptor but do not confer infection susceptibility to Gibbon Ape Leukemia Virus (GaLV), Simian sarcoma-associated virus (SSAV) and Feline leukemia virus subgroup B (FeLV-B). This chain is Sodium-dependent phosphate transporter 1 (Slc20a1), found in Mus musculus (Mouse).